The following is a 353-amino-acid chain: Lipase-specific foldase (353 aa).

At M1–G19 the chain is on the cytoplasmic side. A helical transmembrane segment spans residues A20–L40. Residues R41–G353 lie on the Periplasmic side of the membrane.

The protein belongs to the lipase chaperone family. Monomer. Interacts with lipase (lip).

Its subcellular location is the cell inner membrane. Its function is as follows. Involved in the folding of the extracellular lipase (lip) during its passage through the periplasm. The sequence is that of Lipase-specific foldase from Burkholderia plantarii.